A 680-amino-acid polypeptide reads, in one-letter code: Pescadillo homolog (680 aa).

A disordered region spans residues 310–330 (LDQAKDEQTAETTEESSDTID). The region spanning 351–470 (QAGSLFAPFT…KLVRPDLYSP (120 aa)) is the BRCT domain. Positions 472 to 680 (ATLPPHLSPW…RRKLEKGAAK (209 aa)) are disordered. Residues 496-523 (AEQEEEGEAEMAEDSDEEMEEAADEKSK) are a coiled coil. A compositionally biased stretch (acidic residues) spans 497–518 (EQEEEGEAEMAEDSDEEMEEAA). The segment covering 519–529 (DEKSKTASKDE) has biased composition (basic and acidic residues). Acidic residues-rich tracts occupy residues 530 to 543 (AESE…DESV) and 551 to 585 (GTDD…DEEE). Positions 586–596 (VARTQHQKELE) are enriched in basic and acidic residues. Residues 613-680 (ASKKKASQAK…RRKLEKGAAK (68 aa)) are a coiled coil. Positions 616-628 (KKASQAKKIAAKK) are enriched in basic residues. The span at 629–639 (RKEEEEIERQK) shows a compositional bias: basic and acidic residues.

It belongs to the pescadillo family. As to quaternary structure, component of the NOP7 complex, composed of erb1, nop7 and ytm1. The complex is held together by erb1, which interacts with nop7 via its N-terminal domain and with ytm1 via a high-affinity interaction between the seven-bladed beta-propeller domains of the 2 proteins. The NOP7 complex associates with the 66S pre-ribosome.

It localises to the nucleus. The protein resides in the nucleolus. The protein localises to the nucleoplasm. In terms of biological role, component of the NOP7 complex, which is required for maturation of the 25S and 5.8S ribosomal RNAs and formation of the 60S ribosome. The polypeptide is Pescadillo homolog (nop7) (Aspergillus clavatus (strain ATCC 1007 / CBS 513.65 / DSM 816 / NCTC 3887 / NRRL 1 / QM 1276 / 107)).